A 214-amino-acid polypeptide reads, in one-letter code: Pyridoxine/pyridoxamine 5'-phosphate oxidase (214 aa).

Residues 8 to 11 (RINY) and K66 each bind substrate. Residues 61-66 (RIVLIK), 76-77 (FT), R82, K83, and Q105 contribute to the FMN site. Positions 123, 127, and 131 each coordinate substrate. Residues 140–141 (QS) and W184 contribute to the FMN site. 190 to 192 (RLH) is a substrate binding site. R194 is a binding site for FMN.

Belongs to the pyridoxamine 5'-phosphate oxidase family. Homodimer. The cofactor is FMN.

The enzyme catalyses pyridoxamine 5'-phosphate + O2 + H2O = pyridoxal 5'-phosphate + H2O2 + NH4(+). The catalysed reaction is pyridoxine 5'-phosphate + O2 = pyridoxal 5'-phosphate + H2O2. The protein operates within cofactor metabolism; pyridoxal 5'-phosphate salvage; pyridoxal 5'-phosphate from pyridoxamine 5'-phosphate: step 1/1. Its pathway is cofactor metabolism; pyridoxal 5'-phosphate salvage; pyridoxal 5'-phosphate from pyridoxine 5'-phosphate: step 1/1. In terms of biological role, catalyzes the oxidation of either pyridoxine 5'-phosphate (PNP) or pyridoxamine 5'-phosphate (PMP) into pyridoxal 5'-phosphate (PLP). This Burkholderia cenocepacia (strain HI2424) protein is Pyridoxine/pyridoxamine 5'-phosphate oxidase.